The chain runs to 174 residues: Shikimate kinase (174 aa).

Residue 15-20 (GTGKST) participates in ATP binding. S19 contacts Mg(2+). D37, R61, and G82 together coordinate substrate. R120 is an ATP binding site. R138 contributes to the substrate binding site.

Belongs to the shikimate kinase family. Monomer. It depends on Mg(2+) as a cofactor.

Its subcellular location is the cytoplasm. The enzyme catalyses shikimate + ATP = 3-phosphoshikimate + ADP + H(+). It functions in the pathway metabolic intermediate biosynthesis; chorismate biosynthesis; chorismate from D-erythrose 4-phosphate and phosphoenolpyruvate: step 5/7. Its function is as follows. Catalyzes the specific phosphorylation of the 3-hydroxyl group of shikimic acid using ATP as a cosubstrate. This chain is Shikimate kinase, found in Staphylococcus aureus (strain NCTC 8325 / PS 47).